Consider the following 610-residue polypeptide: Chitinase 63 (610 aa).

The first 30 residues, 1–30, serve as a signal peptide directing secretion; it reads MRFRHKAAALAATLALPLAGLVGLASPAQA. The 104-residue stretch at 31–134 folds into the CBM2 domain; the sequence is ATSATATFQK…KINGGSCDGS (104 aa). Disordered regions lie at residues 125-153 and 208-239; these read KINGGSCDGSSVPGDEAPSAPGTPTASNI and ARDTGDQTGPASGSVKVTTTGGDGGEPNPNPG. The region spanning 144 to 229 is the Fibronectin type-III domain; that stretch reads APGTPTASNI…GSVKVTTTGG (86 aa). The span at 213-224 shows a compositional bias: polar residues; it reads DQTGPASGSVKV. One can recognise a GH18 domain in the interval 241 to 610; the sequence is EVKMGYFTNW…LVSAIDSGLK (370 aa). Chitin is bound by residues 313–314 and 340–343; these read DQ and GGWT. Glu-383 acts as the Proton donor in catalysis. Chitin-binding positions include Tyr-384, 450-453, and Trp-590; that span reads MTYD.

This sequence belongs to the glycosyl hydrolase 18 family. Chitinase class II subfamily.

It carries out the reaction Random endo-hydrolysis of N-acetyl-beta-D-glucosaminide (1-&gt;4)-beta-linkages in chitin and chitodextrins.. The protein is Chitinase 63 (chtA) of Streptomyces plicatus.